The chain runs to 225 residues: Ribonuclease 3 (225 aa).

One can recognise an RNase III domain in the interval 5–127; it reads IEKLTRQLGY…IIGAVYLDSD (123 aa). Glutamate 40 is a Mg(2+) binding site. Aspartate 44 is a catalytic residue. The Mg(2+) site is built by aspartate 113 and glutamate 116. Residue glutamate 116 is part of the active site. The DRBM domain occupies 154–224; it reads DPKTRLQEFL…AELALEQLTN (71 aa).

This sequence belongs to the ribonuclease III family. Homodimer. It depends on Mg(2+) as a cofactor.

It is found in the cytoplasm. The catalysed reaction is Endonucleolytic cleavage to 5'-phosphomonoester.. In terms of biological role, digests double-stranded RNA. Involved in the processing of primary rRNA transcript to yield the immediate precursors to the large and small rRNAs (23S and 16S). Processes some mRNAs, and tRNAs when they are encoded in the rRNA operon. Processes pre-crRNA and tracrRNA of type II CRISPR loci if present in the organism. This is Ribonuclease 3 from Vibrio vulnificus (strain YJ016).